Consider the following 608-residue polypeptide: Granule-bound starch synthase 1, chloroplastic/amyloplastic (608 aa).

Residues 1-78 constitute a chloroplast transit peptide; it reads MATVIAAHFV…NGRPAAKIIC (78 aa). K96 lines the ADP-alpha-D-glucose pocket. The segment at 587–608 is disordered; the sequence is GSEPGTEGEEIAPLAKENVPTP.

This sequence belongs to the glycosyltransferase 1 family. Bacterial/plant glycogen synthase subfamily. In terms of tissue distribution, synthesized in a number of different organs, but most abundantly in tubers.

The protein resides in the plastid. Its subcellular location is the chloroplast. It localises to the amyloplast. The enzyme catalyses an NDP-alpha-D-glucose + [(1-&gt;4)-alpha-D-glucosyl](n) = [(1-&gt;4)-alpha-D-glucosyl](n+1) + a ribonucleoside 5'-diphosphate + H(+). Its pathway is glycan biosynthesis; starch biosynthesis. In terms of biological role, responsible for the synthesis of amylose in reserve starch. The chain is Granule-bound starch synthase 1, chloroplastic/amyloplastic (WAXY) from Manihot esculenta (Cassava).